The primary structure comprises 593 residues: Regulatory protein NPR1 (593 aa).

A phosphoserine mark is found at S11, S15, S55, and S59. A BTB domain is found at 65–144; the sequence is SDAKLVLSDG…VYSSRVRPPP (80 aa). The C2HC NPR-type zinc-finger motif lies at 147–161; the sequence is VSECADENCCHVACR. Residues C150 and C155 each contribute to the Zn(2+) site. C156 carries the S-nitrosocysteine modification. H157 and C160 together coordinate Zn(2+). ANK repeat units lie at residues 229 to 258, 265 to 295, 297 to 324, 328 to 357, and 361 to 397; these read KSNV…ELGL, KHVS…NLDD, CALH…DVNH, RGYT…SASE, and EGRT…CVEI. The short motif at 345–348 is the SIM3, required fo binding to SUMO3 and subsequent sumoylation element; the sequence is ILSL. The salicylic acid-binding core (SBC) stretch occupies residues 387–525; that stretch reads HSLKGRLCVE…DQIMNCEDLT (139 aa). R432 contacts salicylate. Residues 537–554 carry the Nuclear localization signal motif; it reads KRLQKKQRYMEIQETLKK. The segment at 563 to 593 is disordered; that stretch reads LGNSSLTDSTSSTSKSTGGKRSNRKLSHRRR. Low complexity predominate over residues 566 to 579; it reads SSLTDSTSSTSKST. Residues 583–593 are compositionally biased toward basic residues; the sequence is RSNRKLSHRRR.

Belongs to the plant 'ANKYRIN-BTB/POZ' family. 'NPR1-like' subfamily. Homodimer. Oligomer of dimers in an uninduced quiescent state; disulfide-linked. Forms activated (i.e. sumoylated) homodimers and monomers upon systemic acquired resistance (SAR) induction. Interacts with TGA1, TGA3, TGA4, TGA5, TGA6, TGA7 and with reduced forms of TGA1 and TGA4. Activated homodimer binds two TGA3 dimers in the presence of DNA via its ANK 2 repeat (265-295), thus forming a TGA3(2)-NPR1(2)-TGA3(2) complex in which NPR1 serves as a transcription cofactor by bridging two transcription factor complexes in an enhanceosome. Interacts with NIMIN-1 and NIMIN-3 via its C-terminal region, and with NIMIN-2 via its N-terminal region. Interacts with SUMO3 but not with SUMO1 and SUMO2; this interaction is required for phosphorylation at Ser-11 and Ser-15, and triggers activation by sumoylation and subsequent degradation. Binds to NPR3 and NPR4; these interactions are promoted by association of salicylic acid (SA) with NPR3, but disrupted by SA association with NPR4, probably due to conformational changes. Binds to CUL3A, a core component of the cullin-RING ubiquitin ligases (CRL); this interaction requires NPR3 and NPR4. Interacts with NPR2 independently of SA. Binds to WRKY70 when unmodified (i.e. not sumoylated). In terms of processing, phosphorylation at Ser-55 and Ser-59 prevents sumoylation to ensure stability and quiescence. Phosphorylated at Ser-11 and Ser-15 in the nucleus; facilitates its recruitment to a cullin3-based ubiquitin ligase leading to polyubiquitination and subsequent CUL3/CSN-mediated degradation. This phosphorylation at Ser-11 and Ser-15 requires interaction with SUMO3, and promotes in turn activation by sumoylation and subsequent degradation. Post-translationally, ubiquitinated. In terms of processing, sumoylated by SUMO3 independently of an E3 ligase to activate defense gene expression by switching from association with WRKY transcriptional repressors (e.g. WRKY70) to TGA transcriptional activators (e.g. TGA3). Sumoylation is inhibited by phosphorylation at Ser-55 and Ser-59, but seems to promote phosphorylation at Ser-11 and Ser-15. Sumoylation also triggers degradation, making immune induction transient. The Cys-82-SH group reacts with Cys-216-SH of the other subunit to form an intermolecular disulfide. This disulfide might subsequently be reduced upon systemic acquired resistance (SAR) induction. Post-translationally, S-nitrosylation at Cys-156 facilitates its oligomerization.

It localises to the cytoplasm. It is found in the nucleus. The protein resides in the nuclear body. It participates in protein modification; protein ubiquitination. In terms of biological role, salicylic acid (SA)-binding substrate-specific adapter of an E3 ubiquitin-protein ligase complex (CUL3-RBX1-BTB) which mediates the ubiquitination and subsequent proteasomal degradation of target proteins. Transcription cofactor that represses gene expression in the absence of salicylic acid (SA), when attached to negative cis-elements (W-box) with WRKY transcription factors (e.g. WRKY70), but stimulates gene expression upon activation by SA, when sumoylated and attached to positive cis-elements (as-1) with TGA transcription factors (e.g. TGA3), thus confering immunity through a series of gene regulations ending in a significant increase in antimicrobial and defense genes expression (e.g. PR-1 and PR-2). Binds to SA with low capacity; this leads to conformational changes. Key positive regulator of the SA-dependent signaling pathway that negatively regulates jasmonic acid (JA)-dependent signaling pathway. Controls the onset of systemic acquired resistance (SAR). Upon SAR induction, a biphasic change in cellular reduction potential occurs, resulting in reduction of the cytoplasmic oligomeric form to dimeric and monomeric forms, which accumulate in the nucleus and activate gene expression. Appears to control lesion expansion by acting as an inhibitor of programmed cell death (PCD) during effector-triggered immunity (ETI) that occurs in response to incompatible interaction with avirulent pathogenic bacteria (i.e. Pseudomonas syringae ES4326/avrRpt2) ending in a hypersensitive response (HR). Phosphorylated form is target of proteasome degradation. This is Regulatory protein NPR1 from Arabidopsis thaliana (Mouse-ear cress).